The sequence spans 170 residues: 4-hydroxyphenylacetate 3-monooxygenase reductase component (170 aa).

Belongs to the non-flavoprotein flavin reductase family. HpaC subfamily. Homodimer. 4-HPA 3-monooxygenase consists of a reductase component HpaC and an oxygenase component HpaB.

The enzyme catalyses a reduced flavin + NAD(+) = an oxidized flavin + NADH + 2 H(+). It participates in aromatic compound metabolism; 4-hydroxyphenylacetate degradation; pyruvate and succinate semialdehyde from 4-hydroxyphenylacetate: step 1/7. In terms of biological role, catalyzes the reduction of free flavins (FMN, FAD and riboflavin) by NADH. Subsequently, the reduced flavins diffuse to the large HpaB component or to other electron acceptors such as cytochrome c and Fe(3+) ion. This chain is 4-hydroxyphenylacetate 3-monooxygenase reductase component (hpaC), found in Salmonella typhimurium (strain LT2 / SGSC1412 / ATCC 700720).